Consider the following 305-residue polypeptide: Porphobilinogen deaminase (305 aa).

Cys240 bears the S-(dipyrrolylmethanemethyl)cysteine mark.

The protein belongs to the HMBS family. Monomer. It depends on dipyrromethane as a cofactor.

It catalyses the reaction 4 porphobilinogen + H2O = hydroxymethylbilane + 4 NH4(+). The protein operates within porphyrin-containing compound metabolism; protoporphyrin-IX biosynthesis; coproporphyrinogen-III from 5-aminolevulinate: step 2/4. Tetrapolymerization of the monopyrrole PBG into the hydroxymethylbilane pre-uroporphyrinogen in several discrete steps. This is Porphobilinogen deaminase (hemC) from Xylella fastidiosa (strain 9a5c).